We begin with the raw amino-acid sequence, 379 residues long: Anhydro-N-acetylmuramic acid kinase (379 aa).

Residue 9–16 (GTSADGVD) participates in ATP binding.

It belongs to the anhydro-N-acetylmuramic acid kinase family.

It catalyses the reaction 1,6-anhydro-N-acetyl-beta-muramate + ATP + H2O = N-acetyl-D-muramate 6-phosphate + ADP + H(+). The protein operates within amino-sugar metabolism; 1,6-anhydro-N-acetylmuramate degradation. It functions in the pathway cell wall biogenesis; peptidoglycan recycling. Its function is as follows. Catalyzes the specific phosphorylation of 1,6-anhydro-N-acetylmuramic acid (anhMurNAc) with the simultaneous cleavage of the 1,6-anhydro ring, generating MurNAc-6-P. Is required for the utilization of anhMurNAc either imported from the medium or derived from its own cell wall murein, and thus plays a role in cell wall recycling. This is Anhydro-N-acetylmuramic acid kinase from Prochlorococcus marinus (strain MIT 9303).